Consider the following 169-residue polypeptide: S-ribosylhomocysteine lyase (169 aa).

The Fe cation site is built by histidine 54, histidine 58, and cysteine 128.

This sequence belongs to the LuxS family. Homodimer. The cofactor is Fe cation.

It carries out the reaction S-(5-deoxy-D-ribos-5-yl)-L-homocysteine = (S)-4,5-dihydroxypentane-2,3-dione + L-homocysteine. Functionally, involved in the synthesis of autoinducer 2 (AI-2) which is secreted by bacteria and is used to communicate both the cell density and the metabolic potential of the environment. The regulation of gene expression in response to changes in cell density is called quorum sensing. Catalyzes the transformation of S-ribosylhomocysteine (RHC) to homocysteine (HC) and 4,5-dihydroxy-2,3-pentadione (DPD). This chain is S-ribosylhomocysteine lyase, found in Shewanella sediminis (strain HAW-EB3).